The sequence spans 342 residues: 6-hydroxytryprostatin B O-methyltransferase (342 aa).

Aspartate 201 provides a ligand contact to S-adenosyl-L-methionine. The active-site Proton acceptor is the histidine 244.

The protein belongs to the class I-like SAM-binding methyltransferase superfamily. Cation-independent O-methyltransferase family. Homodimer.

The catalysed reaction is 6-hydroxytryprostatin B + S-adenosyl-L-methionine = tryprostatin A + S-adenosyl-L-homocysteine + H(+). Its pathway is alkaloid biosynthesis. Functionally, 6-hydroxytryprostatin B O-methyltransferase; part of the gene cluster that mediates the biosynthesis of fumitremorgins, indole alkaloids that carry not only intriguing chemical structures, but also interesting biological and pharmacological activities. The biosynthesis of fumitremorgin-type alkaloids begins by condensation of the two amino acids L-tryptophan and L-proline to brevianamide F, catalyzed by the non-ribosomal peptide synthetase ftmA. Brevianamide F is then prenylated by the prenyltransferase ftmPT1/ftmB in the presence of dimethylallyl diphosphate, resulting in the formation of tryprostatin B. The three cytochrome P450 monooxygenases, ftmP450-1/ftmC, ftmP450-2/ftmE and ftmP450-3/FtmG, are responsible for the conversion of tryprostatin B to 6-hydroxytryprostatin B, tryprostatin A to fumitremorgin C and fumitremorgin C to 12,13-dihydroxyfumitremorgin C, respectively. The putative methyltransferase ftmMT/ftmD is expected for the conversion of 6-hydroxytryprostatin B to tryprostatin A. FtmPT2/FtmH catalyzes the prenylation of 12,13-dihydroxyfumitre-morgin C in the presence of dimethylallyl diphosphate, resulting in the formation of fumitremorgin B. Fumitremorgin B is further converted to verruculogen by ftmOx1/ftmF via the insertion of an endoperoxide bond between the two prenyl moieties. In some fungal species, verruculogen is further converted to fumitremorgin A, but the enzymes involved in this step have not been identified yet. The protein is 6-hydroxytryprostatin B O-methyltransferase of Aspergillus fumigatus (Neosartorya fumigata).